We begin with the raw amino-acid sequence, 125 residues long: UPF0738 protein GK0828 (125 aa).

Belongs to the UPF0738 family.

In Geobacillus kaustophilus (strain HTA426), this protein is UPF0738 protein GK0828.